Consider the following 1192-residue polypeptide: MTAADKHLYDTDLLDVLSQRVMVGDGAMGTQLQAADLTLDDFRGLEGCNEILNETRPDVLETIHRNYFEAGADAVETNTFGCNLSNLGDYDIADRIRDLSQKGTAIARRVADELGSPDRKRYVLGSMGPGTKLPTLGHTEYAVIRDAYTEAALGMLDGGADAILVETCQDLLQLKAAVLGSRRAMTRAGRHIPVFAHVTVETTGTMLLGSEIGAALTAVEPLGVDMIGLNCATGPAEMSEHLRHLSRHARIPVSVMPNAGLPVLGAKGAEYPLLPDELAEALAGFIAEFGLSLVGGCCGTTPAHIREVAAAVANIKRPERQVSYEPSVSSLYTAIPFAQDASVLVIGERTNANGSKGFREAMIAEDYQKCLDIAKDQTRDGAHLLDLCVDYVGRDGVADMKALASRLATSSTLPIMLDSTETAVLQAGLEHLGGRCAINSVNYEDGDGPESRFAKTMALVAEHGAAVVALTIDEEGQARTAQKKVEIAERLINDITGNWGVDESSILIDTLTFTIATGQEESRRDGIETIEAIRELKKRHPDVQTTLGLSNISFGLNPAARQVLNSVFLHECQEAGLDSAIVHASKILPMNRIPEEQRNVALDLVYDRRREDYDPLQELMRLFEGVSAASSKEDRLAELAGLPLFERLAQRIVDGERNGLDADLDEAMTQKPPLQIINEHLLAGMKTVGELFGSGQMQLPFVLQSAEVMKAAVAYLEPHMERSDDDSGKGRIVLATVKGDVHDIGKNLVDIILSNNGYEVVNIGIKQPIATILEVAEDKSADVVGMSGLLVKSTVVMKENLEEMNTRGVAEKFPVLLGGAALTRSYVENDLAEIYQGEVHYARDAFEGLKLMDTIMSAKRGEAPDENSPEAIKAREKEAERKARHQRSKRIAAQRKAAEEPVEVPERSDVAADIEVPAPPFWGSRIVKGLAVADYTGLLDERALFLGQWGLRGQRGGEGPSYEDLVETEGRPRLRYWLDRLSTDGILAHAAVVYGYFPAVSEGNDIVVLTEPKPDAPVRYRFHFPRQQRGRFLCIADFIRSRELAAERGEVDVLPFQLVTMGQPIADFANELFASNAYRDYLEVHGIGVQLTEALAEYWHRRIREELKFSGDRAMAAEDPEAKEDYFKLGYRGARFAFGYGACPDLEDRAKMMALLEPERIGVTLSEELQLHPEQSTDAFVLHHPEAKYFNV.

The Hcy-binding domain maps to Met1–Val312. Residues Cys231, Cys297, and Cys298 each coordinate Zn(2+). The region spanning Val343–Ala601 is the Pterin-binding domain. One can recognise a B12-binding N-terminal domain in the interval Arg635–Gly728. In terms of domain architecture, B12-binding spans Lys729 to Glu866. Methylcob(III)alamin is bound by residues Gly739 to Asp743, His742, Ser787, and Ala845. Residues Arg860–Val904 are disordered. Residues Ile872–Arg881 show a composition bias toward basic and acidic residues. Positions Lys882–Ala893 are enriched in basic residues. The 300-residue stretch at Ala893–Val1192 folds into the AdoMet activation domain. Residues Asp940, Arg1135, and Tyr1189–Phe1190 contribute to the S-adenosyl-L-methionine site.

Belongs to the vitamin-B12 dependent methionine synthase family. Requires methylcob(III)alamin as cofactor. It depends on Zn(2+) as a cofactor.

The catalysed reaction is (6S)-5-methyl-5,6,7,8-tetrahydrofolate + L-homocysteine = (6S)-5,6,7,8-tetrahydrofolate + L-methionine. It participates in amino-acid biosynthesis; L-methionine biosynthesis via de novo pathway; L-methionine from L-homocysteine (MetH route): step 1/1. In terms of biological role, catalyzes the transfer of a methyl group from methyl-cobalamin to homocysteine, yielding enzyme-bound cob(I)alamin and methionine. Subsequently, remethylates the cofactor using methyltetrahydrofolate. The sequence is that of Methionine synthase (metH) from Mycobacterium tuberculosis (strain ATCC 25618 / H37Rv).